The sequence spans 459 residues: ATP synthase subunit beta (459 aa).

ATP is bound at residue 149 to 156 (GGAGVGKT).

It belongs to the ATPase alpha/beta chains family. As to quaternary structure, F-type ATPases have 2 components, CF(1) - the catalytic core - and CF(0) - the membrane proton channel. CF(1) has five subunits: alpha(3), beta(3), gamma(1), delta(1), epsilon(1). CF(0) has three main subunits: a(1), b(2) and c(9-12). The alpha and beta chains form an alternating ring which encloses part of the gamma chain. CF(1) is attached to CF(0) by a central stalk formed by the gamma and epsilon chains, while a peripheral stalk is formed by the delta and b chains.

The protein localises to the cell inner membrane. The catalysed reaction is ATP + H2O + 4 H(+)(in) = ADP + phosphate + 5 H(+)(out). In terms of biological role, produces ATP from ADP in the presence of a proton gradient across the membrane. The catalytic sites are hosted primarily by the beta subunits. The polypeptide is ATP synthase subunit beta (Pseudomonas savastanoi pv. phaseolicola (strain 1448A / Race 6) (Pseudomonas syringae pv. phaseolicola (strain 1448A / Race 6))).